The following is a 96-amino-acid chain: RNA-binding protein Hfq (96 aa).

Residues 9–68 (DPFLNALRRERVPVSIYLVNGIKLQGQIESFDQFVILLKNTVSQMVYKHAISTVVPSRPV) form the Sm domain. The disordered stretch occupies residues 64 to 96 (PSRPVSHHSNTGTNQAGTNYSGGNATQQDDVAE). The span at 70-96 (HHSNTGTNQAGTNYSGGNATQQDDVAE) shows a compositional bias: polar residues.

Belongs to the Hfq family. In terms of assembly, homohexamer.

In terms of biological role, RNA chaperone that binds small regulatory RNA (sRNAs) and mRNAs to facilitate mRNA translational regulation in response to envelope stress, environmental stress and changes in metabolite concentrations. Also binds with high specificity to tRNAs. In Proteus mirabilis (strain HI4320), this protein is RNA-binding protein Hfq.